Here is a 359-residue protein sequence, read N- to C-terminus: Phosphate acyltransferase (359 aa).

It belongs to the PlsX family. As to quaternary structure, homodimer. Probably interacts with PlsY.

The protein localises to the cytoplasm. It carries out the reaction a fatty acyl-[ACP] + phosphate = an acyl phosphate + holo-[ACP]. It participates in lipid metabolism; phospholipid metabolism. In terms of biological role, catalyzes the reversible formation of acyl-phosphate (acyl-PO(4)) from acyl-[acyl-carrier-protein] (acyl-ACP). This enzyme utilizes acyl-ACP as fatty acyl donor, but not acyl-CoA. This chain is Phosphate acyltransferase, found in Koribacter versatilis (strain Ellin345).